Here is a 209-residue protein sequence, read N- to C-terminus: MAKTHEIKVERRADEGKGASRRLRHAGVIPAIVYGGELEPVSIQLNHEQIWLAQQNEWFYSSILDLNLNGDVQQVLLRDMQRHPFKQLIMHIDFQRVSANEKLSASVPLHFINEAISPAGKSSEVVVTHELNEVQVVCLPKDLPEFIEIDLSTLEVGAVIHLSEITLPAGVEIPELKLGKEHDVAVVIAKHGQVEADDVADEAAEGDAK.

This sequence belongs to the bacterial ribosomal protein bL25 family. CTC subfamily. In terms of assembly, part of the 50S ribosomal subunit; part of the 5S rRNA/L5/L18/L25 subcomplex. Contacts the 5S rRNA. Binds to the 5S rRNA independently of L5 and L18.

Its function is as follows. This is one of the proteins that binds to the 5S RNA in the ribosome where it forms part of the central protuberance. The protein is Large ribosomal subunit protein bL25 of Xanthomonas campestris pv. campestris (strain 8004).